A 245-amino-acid chain; its full sequence is NAD-dependent protein deacylase (245 aa).

The region spanning 1-245 (MEAVWESARI…RLSRAMGIDI (245 aa)) is the Deacetylase sirtuin-type domain. An NAD(+)-binding site is contributed by 22 to 41 (GAGISAESGIPTFRGKDGLW). Residues Y66 and R69 each contribute to the substrate site. 100–103 (QNVD) contacts NAD(+). Catalysis depends on H118, which acts as the Proton acceptor. The Zn(2+) site is built by C126, C129, C146, and C149. NAD(+) contacts are provided by residues 186 to 188 (GTS), 212 to 214 (NPE), and M241.

Belongs to the sirtuin family. Class III subfamily. Zn(2+) is required as a cofactor.

The protein localises to the cytoplasm. The enzyme catalyses N(6)-acetyl-L-lysyl-[protein] + NAD(+) + H2O = 2''-O-acetyl-ADP-D-ribose + nicotinamide + L-lysyl-[protein]. It catalyses the reaction N(6)-succinyl-L-lysyl-[protein] + NAD(+) + H2O = 2''-O-succinyl-ADP-D-ribose + nicotinamide + L-lysyl-[protein]. In terms of biological role, NAD-dependent lysine deacetylase and desuccinylase that specifically removes acetyl and succinyl groups on target proteins. Modulates the activities of several proteins which are inactive in their acylated form. Deacetylates the N-terminal lysine residue of Alba, the major archaeal chromatin protein and that, in turn, increases Alba's DNA binding affinity, thereby repressing transcription. In Aeropyrum pernix (strain ATCC 700893 / DSM 11879 / JCM 9820 / NBRC 100138 / K1), this protein is NAD-dependent protein deacylase.